The following is a 338-amino-acid chain: UDP-3-O-acylglucosamine N-acyltransferase (338 aa).

Catalysis depends on His251, which acts as the Proton acceptor.

This sequence belongs to the transferase hexapeptide repeat family. LpxD subfamily. Homotrimer.

The catalysed reaction is a UDP-3-O-[(3R)-3-hydroxyacyl]-alpha-D-glucosamine + a (3R)-hydroxyacyl-[ACP] = a UDP-2-N,3-O-bis[(3R)-3-hydroxyacyl]-alpha-D-glucosamine + holo-[ACP] + H(+). The protein operates within bacterial outer membrane biogenesis; LPS lipid A biosynthesis. In terms of biological role, catalyzes the N-acylation of UDP-3-O-acylglucosamine using 3-hydroxyacyl-ACP as the acyl donor. Is involved in the biosynthesis of lipid A, a phosphorylated glycolipid that anchors the lipopolysaccharide to the outer membrane of the cell. This is UDP-3-O-acylglucosamine N-acyltransferase from Psychrobacter arcticus (strain DSM 17307 / VKM B-2377 / 273-4).